A 490-amino-acid chain; its full sequence is Glutathione hydrolase 6 (490 aa).

Residues 1-52 are Cytoplasmic-facing; that stretch reads MEPEAGPVLYQKLRVWEPSLESEEEEEEISEQLILDASGPHDSSGNKAGRLP. The helical; Signal-anchor for type II membrane protein transmembrane segment at 53–73 threads the bilayer; that stretch reads GAWAQLVAALLLLAIGFSLAV. Topologically, residues 74-490 are extracellular; sequence RQLCSSGASP…PSGCCPFQGF (417 aa). N-linked (GlcNAc...) asparagine glycans are attached at residues Asn-160, Asn-165, and Asn-374.

It belongs to the gamma-glutamyltransferase family. In terms of assembly, heterodimer composed of the light and heavy chains. The active site is located in the light chain. In terms of processing, cleaved by autocatalysis into a large and a small subunit and the autocatalytic cleavage is essential to the functional activation of the enzyme.

It is found in the membrane. The enzyme catalyses an N-terminal (5-L-glutamyl)-[peptide] + an alpha-amino acid = 5-L-glutamyl amino acid + an N-terminal L-alpha-aminoacyl-[peptide]. The catalysed reaction is glutathione + H2O = L-cysteinylglycine + L-glutamate. It catalyses the reaction an S-substituted glutathione + H2O = an S-substituted L-cysteinylglycine + L-glutamate. It participates in sulfur metabolism; glutathione metabolism. Hydrolyzes and transfers gamma-glutamyl moieties from glutathione and other gamma-glutamyl compounds to acceptors. The chain is Glutathione hydrolase 6 from Bos taurus (Bovine).